A 369-amino-acid polypeptide reads, in one-letter code: Cobalt-precorrin-5B C(1)-methyltransferase (369 aa).

The protein belongs to the CbiD family.

It carries out the reaction Co-precorrin-5B + S-adenosyl-L-methionine = Co-precorrin-6A + S-adenosyl-L-homocysteine. It participates in cofactor biosynthesis; adenosylcobalamin biosynthesis; cob(II)yrinate a,c-diamide from sirohydrochlorin (anaerobic route): step 6/10. In terms of biological role, catalyzes the methylation of C-1 in cobalt-precorrin-5B to form cobalt-precorrin-6A. The protein is Cobalt-precorrin-5B C(1)-methyltransferase of Methanococcus vannielii (strain ATCC 35089 / DSM 1224 / JCM 13029 / OCM 148 / SB).